A 345-amino-acid chain; its full sequence is Holliday junction branch migration complex subunit RuvB (345 aa).

The segment at 3–187 (LDILQNRNNL…FGFTARLDFY (185 aa)) is large ATPase domain (RuvB-L). ATP contacts are provided by residues L26, R27, G68, K71, T72, T73, 134–136 (EDF), R177, Y187, and R224. Mg(2+) is bound at residue T72. A small ATPAse domain (RuvB-S) region spans residues 188-259 (SPEELLQVLI…IALKAMDVYE (72 aa)). The tract at residues 262-345 (SLGLDRLDRA…EDLSGFELYL (84 aa)) is head domain (RuvB-H). DNA contacts are provided by R317 and R322.

It belongs to the RuvB family. As to quaternary structure, homohexamer. Forms an RuvA(8)-RuvB(12)-Holliday junction (HJ) complex. HJ DNA is sandwiched between 2 RuvA tetramers; dsDNA enters through RuvA and exits via RuvB. An RuvB hexamer assembles on each DNA strand where it exits the tetramer. Each RuvB hexamer is contacted by two RuvA subunits (via domain III) on 2 adjacent RuvB subunits; this complex drives branch migration. In the full resolvosome a probable DNA-RuvA(4)-RuvB(12)-RuvC(2) complex forms which resolves the HJ.

The protein localises to the cytoplasm. It carries out the reaction ATP + H2O = ADP + phosphate + H(+). In terms of biological role, the RuvA-RuvB-RuvC complex processes Holliday junction (HJ) DNA during genetic recombination and DNA repair, while the RuvA-RuvB complex plays an important role in the rescue of blocked DNA replication forks via replication fork reversal (RFR). RuvA specifically binds to HJ cruciform DNA, conferring on it an open structure. The RuvB hexamer acts as an ATP-dependent pump, pulling dsDNA into and through the RuvAB complex. RuvB forms 2 homohexamers on either side of HJ DNA bound by 1 or 2 RuvA tetramers; 4 subunits per hexamer contact DNA at a time. Coordinated motions by a converter formed by DNA-disengaged RuvB subunits stimulates ATP hydrolysis and nucleotide exchange. Immobilization of the converter enables RuvB to convert the ATP-contained energy into a lever motion, pulling 2 nucleotides of DNA out of the RuvA tetramer per ATP hydrolyzed, thus driving DNA branch migration. The RuvB motors rotate together with the DNA substrate, which together with the progressing nucleotide cycle form the mechanistic basis for DNA recombination by continuous HJ branch migration. Branch migration allows RuvC to scan DNA until it finds its consensus sequence, where it cleaves and resolves cruciform DNA. The protein is Holliday junction branch migration complex subunit RuvB of Tropheryma whipplei (strain TW08/27) (Whipple's bacillus).